Consider the following 137-residue polypeptide: Fibroblast growth factor 2 (137 aa).

Position 27 (Asn27) interacts with heparin. The residue at position 73 (Tyr73) is a Phosphotyrosine; by TEC. A Glycyl lysine isopeptide (Lys-Gly) (interchain with G-Cter in SUMO1) cross-link involves residue Lys86. The segment at 119–135 (KRTGQYKLGSKTGPGQK) is heparin-binding.

It belongs to the heparin-binding growth factors family. As to quaternary structure, monomer. Homodimer. Interacts with FGFR1, FGFR2, FGFR3 and FGFR4. Affinity between fibroblast growth factors (FGFs) and their receptors is increased by heparan sulfate glycosaminoglycans that function as coreceptors. Interacts with CSPG4, FGFBP1 and TEC. Found in a complex with FGFBP1, FGF1 and FGF2. Interacts with FGFBP3. Interacts with integrin ITGAV:ITGB3; the interaction is required for FGF2 signaling. Interacts with SNORC (via the extracellular domain). Interacts with glypican GPC3. Phosphorylation at Tyr-73 regulates FGF2 unconventional secretion.

The protein localises to the secreted. It localises to the nucleus. Functionally, acts as a ligand for FGFR1, FGFR2, FGFR3 and FGFR4. Also acts as an integrin ligand which is required for FGF2 signaling. Binds to integrin ITGAV:ITGB3. Plays an important role in the regulation of cell survival, cell division, cell differentiation and cell migration. Functions as a potent mitogen in vitro. Can induce angiogenesis. Mediates phosphorylation of ERK1/2 and thereby promotes retinal lens fiber differentiation. This chain is Fibroblast growth factor 2 (FGF2), found in Oryctolagus cuniculus (Rabbit).